Reading from the N-terminus, the 288-residue chain is 33 kDa chaperonin (288 aa).

Intrachain disulfides connect cysteine 235–cysteine 237 and cysteine 268–cysteine 271.

Belongs to the HSP33 family. Post-translationally, under oxidizing conditions two disulfide bonds are formed involving the reactive cysteines. Under reducing conditions zinc is bound to the reactive cysteines and the protein is inactive.

Its subcellular location is the cytoplasm. Redox regulated molecular chaperone. Protects both thermally unfolding and oxidatively damaged proteins from irreversible aggregation. Plays an important role in the bacterial defense system toward oxidative stress. The sequence is that of 33 kDa chaperonin from Streptococcus thermophilus (strain ATCC BAA-250 / LMG 18311).